The following is a 357-amino-acid chain: UDP-N-acetylglucosamine--N-acetylmuramyl-(pentapeptide) pyrophosphoryl-undecaprenol N-acetylglucosamine transferase (357 aa).

UDP-N-acetyl-alpha-D-glucosamine contacts are provided by residues 13–15, asparagine 122, arginine 163, serine 191, and glutamine 288; that span reads TGG.

This sequence belongs to the glycosyltransferase 28 family. MurG subfamily.

The protein resides in the cell inner membrane. The catalysed reaction is di-trans,octa-cis-undecaprenyl diphospho-N-acetyl-alpha-D-muramoyl-L-alanyl-D-glutamyl-meso-2,6-diaminopimeloyl-D-alanyl-D-alanine + UDP-N-acetyl-alpha-D-glucosamine = di-trans,octa-cis-undecaprenyl diphospho-[N-acetyl-alpha-D-glucosaminyl-(1-&gt;4)]-N-acetyl-alpha-D-muramoyl-L-alanyl-D-glutamyl-meso-2,6-diaminopimeloyl-D-alanyl-D-alanine + UDP + H(+). It participates in cell wall biogenesis; peptidoglycan biosynthesis. In terms of biological role, cell wall formation. Catalyzes the transfer of a GlcNAc subunit on undecaprenyl-pyrophosphoryl-MurNAc-pentapeptide (lipid intermediate I) to form undecaprenyl-pyrophosphoryl-MurNAc-(pentapeptide)GlcNAc (lipid intermediate II). This Gloeobacter violaceus (strain ATCC 29082 / PCC 7421) protein is UDP-N-acetylglucosamine--N-acetylmuramyl-(pentapeptide) pyrophosphoryl-undecaprenol N-acetylglucosamine transferase.